Reading from the N-terminus, the 446-residue chain is NADH-quinone oxidoreductase subunit D (446 aa).

Belongs to the complex I 49 kDa subunit family. As to quaternary structure, NDH-1 is composed of 14 different subunits. Subunits NuoB, C, D, E, F, and G constitute the peripheral sector of the complex.

It localises to the cell membrane. The catalysed reaction is a quinone + NADH + 5 H(+)(in) = a quinol + NAD(+) + 4 H(+)(out). In terms of biological role, NDH-1 shuttles electrons from NADH, via FMN and iron-sulfur (Fe-S) centers, to quinones in the respiratory chain. The immediate electron acceptor for the enzyme in this species is believed to be a menaquinone. Couples the redox reaction to proton translocation (for every two electrons transferred, four hydrogen ions are translocated across the cytoplasmic membrane), and thus conserves the redox energy in a proton gradient. The sequence is that of NADH-quinone oxidoreductase subunit D from Mycobacterium sp. (strain JLS).